The sequence spans 122 residues: Small ribosomal subunit protein uS13 (122 aa).

The disordered stretch occupies residues 95-122; the sequence is SLPCRGQRTSTNARTRKGPKRAAVKKKK. Residues 108–122 are compositionally biased toward basic residues; that stretch reads RTRKGPKRAAVKKKK.

It belongs to the universal ribosomal protein uS13 family. As to quaternary structure, part of the 30S ribosomal subunit. Forms a loose heterodimer with protein S19. Forms two bridges to the 50S subunit in the 70S ribosome.

In terms of biological role, located at the top of the head of the 30S subunit, it contacts several helices of the 16S rRNA. In the 70S ribosome it contacts the 23S rRNA (bridge B1a) and protein L5 of the 50S subunit (bridge B1b), connecting the 2 subunits; these bridges are implicated in subunit movement. Contacts the tRNAs in the A and P-sites. The polypeptide is Small ribosomal subunit protein uS13 (Desulforapulum autotrophicum (strain ATCC 43914 / DSM 3382 / VKM B-1955 / HRM2) (Desulfobacterium autotrophicum)).